The chain runs to 269 residues: Regulatory protein RecX (269 aa).

Belongs to the RecX family.

Its subcellular location is the cytoplasm. Modulates RecA activity. This Listeria welshimeri serovar 6b (strain ATCC 35897 / DSM 20650 / CCUG 15529 / CIP 8149 / NCTC 11857 / SLCC 5334 / V8) protein is Regulatory protein RecX.